The primary structure comprises 746 residues: tRNA (cytosine(34)-C(5))-methyltransferase (746 aa).

The interval M1–Q30 is disordered. A compositionally biased stretch (basic and acidic residues) spans R18–Q30. S-adenosyl-L-methionine is bound by residues C184–K190, D216, D243, and D270. Residue C323 is the Nucleophile of the active site. Disordered stretches follow at residues Q454 to W475 and S701 to S746. Basic and acidic residues predominate over residues A463–S472. Over residues A704–A714 the composition is skewed to acidic residues. Over residues A731–S746 the composition is skewed to polar residues.

Belongs to the class I-like SAM-binding methyltransferase superfamily. RsmB/NOP family. TRM4 subfamily. In terms of tissue distribution, ubiquitously expressed during embryonic development. Some enrichment is observed in the proventriculus area of the foregut and in the hindgut.

Its subcellular location is the nucleus. The protein localises to the nucleolus. The enzyme catalyses cytidine(34) in tRNA precursor + S-adenosyl-L-methionine = 5-methylcytidine(34) in tRNA precursor + S-adenosyl-L-homocysteine + H(+). Its function is as follows. RNA methyltransferase that methylates tRNAs. Methylates cytosine to 5-methylcytosine (m5C) at position 34 of intron-containing tRNA(Leu)(CAA) precursors. Required for short-term memory. This is tRNA (cytosine(34)-C(5))-methyltransferase from Drosophila melanogaster (Fruit fly).